We begin with the raw amino-acid sequence, 195 residues long: Coagulogen (195 aa).

The first 20 residues, 1-20, serve as a signal peptide directing secretion; the sequence is MEKKLLGIAILFVTVVSVLA. 8 disulfide bridges follow: cysteine 28-cysteine 188, cysteine 30-cysteine 115, cysteine 80-cysteine 182, cysteine 85-cysteine 141, cysteine 95-cysteine 189, cysteine 108-cysteine 161, cysteine 147-cysteine 191, and cysteine 155-cysteine 193.

It belongs to the coagulin family. As to quaternary structure, coagulogen is cleaved after Arg-38 and Arg-66 by a clotting enzyme contained in the hemocyte and activated by a bacterial endotoxin (lipopolysaccharide). This cleavage releases the peptide C and leaves 2 chains of coagulin, A and B, linked by two disulfide bonds. Coagulin molecules interlink to form a gel. As to expression, hemolymph.

It localises to the secreted. Functionally, coagulogen is a gel-forming protein of hemolymph; it hinders the spread of invaders by immobilizing them. In Limulus polyphemus (Atlantic horseshoe crab), this protein is Coagulogen.